The chain runs to 114 residues: Ribonuclease P protein component (114 aa).

It belongs to the RnpA family. In terms of assembly, consists of a catalytic RNA component (M1 or rnpB) and a protein subunit.

It catalyses the reaction Endonucleolytic cleavage of RNA, removing 5'-extranucleotides from tRNA precursor.. Functionally, RNaseP catalyzes the removal of the 5'-leader sequence from pre-tRNA to produce the mature 5'-terminus. It can also cleave other RNA substrates such as 4.5S RNA. The protein component plays an auxiliary but essential role in vivo by binding to the 5'-leader sequence and broadening the substrate specificity of the ribozyme. The polypeptide is Ribonuclease P protein component (Buchnera aphidicola subsp. Schizaphis graminum (strain Sg)).